A 207-amino-acid polypeptide reads, in one-letter code: Urease accessory protein UreG (207 aa).

16-23 (GPVGSGKT) contacts GTP.

This sequence belongs to the SIMIBI class G3E GTPase family. UreG subfamily. In terms of assembly, homodimer. UreD, UreF and UreG form a complex that acts as a GTP-hydrolysis-dependent molecular chaperone, activating the urease apoprotein by helping to assemble the nickel containing metallocenter of UreC. The UreE protein probably delivers the nickel.

It localises to the cytoplasm. In terms of biological role, facilitates the functional incorporation of the urease nickel metallocenter. This process requires GTP hydrolysis, probably effectuated by UreG. This is Urease accessory protein UreG from Cupriavidus metallidurans (strain ATCC 43123 / DSM 2839 / NBRC 102507 / CH34) (Ralstonia metallidurans).